Consider the following 144-residue polypeptide: Maximins 3/H14 (144 aa).

Residues 1-18 form the signal peptide; sequence MNFKYIVAVSFLIASAYA. 2 propeptides span residues 19 to 43 and 73 to 122; these read RSVQNDEQSLSQRDVLEEESLREIR and RTAE…KKEK. Position 143 is an isoleucine amide (Ile-143).

Belongs to the bombinin family. As to expression, expressed by the skin glands.

The protein resides in the secreted. Functionally, maximin-3 shows antibacterial activity against both Gram-positive and Gram-negative bacteria. It also shows antimicrobial activity against the fungus C.albicans, but not against A.flavus nor P.uticale. It has little hemolytic activity. It possess a significant cytotoxicity against tumor cell lines. It possess a significant anti-HIV activity. It shows high spermicidal activity. In terms of biological role, maximin-H14 shows antimicrobial activity against bacteria and against the fungus C.albicans. Shows strong hemolytic activity. The chain is Maximins 3/H14 from Bombina maxima (Giant fire-bellied toad).